We begin with the raw amino-acid sequence, 101 residues long: MLQVQEKAGSVFFSIKAQPRSSKSMITGEYDGSIKVNLKAPPVDGEANLECCRLLARTLGVARSSVEIVSGTRGKMKRVKVFGLSAVEFTEKITPYLYSSP.

It belongs to the UPF0235 family.

In Chlorobium phaeobacteroides (strain BS1), this protein is UPF0235 protein Cphamn1_2066.